We begin with the raw amino-acid sequence, 88 residues long: Small ribosomal subunit protein uS15 (88 aa).

It belongs to the universal ribosomal protein uS15 family. Part of the 30S ribosomal subunit. Forms a bridge to the 50S subunit in the 70S ribosome, contacting the 23S rRNA.

In terms of biological role, one of the primary rRNA binding proteins, it binds directly to 16S rRNA where it helps nucleate assembly of the platform of the 30S subunit by binding and bridging several RNA helices of the 16S rRNA. Its function is as follows. Forms an intersubunit bridge (bridge B4) with the 23S rRNA of the 50S subunit in the ribosome. This chain is Small ribosomal subunit protein uS15, found in Pelobacter propionicus (strain DSM 2379 / NBRC 103807 / OttBd1).